Here is a 3419-residue protein sequence, read N- to C-terminus: Genome polyprotein (3419 aa).

Positions Met1–Asn25 are disordered. Residues Met1 to Arg104 are Cytoplasmic-facing. The hydrophobic; homodimerization of capsid protein C stretch occupies residues Leu37–Val72. The propeptide at Gly105 to Ala122 is ER anchor for capsid protein C, removed in mature form by serine protease NS3. A helical transmembrane segment spans residues Gly105–Ile125. The Extracellular segment spans residues Thr126–Asn249. Asn192 is a glycosylation site (N-linked (GlcNAc...) asparagine; by host). The helical transmembrane segment at Trp250 to Gly269 threads the bilayer. The Cytoplasmic portion of the chain corresponds to Ser270–Gln274. Residues Lys275–Ser290 traverse the membrane as a helical segment. Residues Ile291–Ser741 lie on the Extracellular side of the membrane. A disulfide bridge links Cys293 with Cys320. A Glycyl lysine isopeptide (Lys-Gly) (interchain with G-Cter in ubiquitin) cross-link involves residue Lys328. Disulfide bonds link Cys350-Cys406, Cys350-Cys411, Cys364-Cys395, Cys382-Cys406, Cys382-Cys411, Cys476-Cys577, and Cys594-Cys625. The segment at Asp388–Gly401 is fusion peptide. Residue Lys567 forms a Glycyl lysine isopeptide (Lys-Gly) (interchain with G-Cter in ubiquitin) linkage. Residues Leu742–Leu763 form a helical membrane-spanning segment. Topologically, residues Asn764–Ser769 are cytoplasmic. A helical membrane pass occupies residues Ile770–Ala790. Over Asp791 to Lys1173 the chain is Lumenal. 6 cysteine pairs are disulfide-bonded: Cys794-Cys805, Cys845-Cys933, Cys969-Cys1013, Cys1070-Cys1119, Cys1081-Cys1102, and Cys1103-Cys1106. N-linked (GlcNAc...) asparagine; by host glycans are attached at residues Asn920 and Asn997. Residues Ile1174 to Ser1194 form a helical membrane-spanning segment. Residues Asp1195–Val1216 lie on the Cytoplasmic side of the membrane. A helical membrane pass occupies residues Ala1217–Phe1237. Over Arg1238–Asp1266 the chain is Lumenal. The chain crosses the membrane as a helical span at residues Leu1267–Pro1287. Over Arg1288 to Asn1291 the chain is Cytoplasmic. Residues Ile1292–Trp1312 traverse the membrane as a helical segment. Residues Arg1313–Met1341 lie on the Lumenal side of the membrane. The helical transmembrane segment at Ala1342–Leu1362 threads the bilayer. The Cytoplasmic segment spans residues Thr1363–Ser1369. Residues Trp1370–Ala1390 form a helical membrane-spanning segment. Over Lys1391–Asp1393 the chain is Lumenal. Residues Ile1394–Gly1414 traverse the membrane as a helical segment. Residues Lys1415–Lys1468 lie on the Cytoplasmic side of the membrane. Residues Ile1421–Pro1460 form an interacts with and activates NS3 protease region. The disordered stretch occupies residues Gly1425 to Asp1447. Residues Val1469 to Trp1489 constitute an intramembrane region (helical). The Lumenal segment spans residues Tyr1490–Thr2166. The 178-residue stretch at Ser1499–Cys1676 folds into the Peptidase S7 domain. Active-site charge relay system; for serine protease NS3 activity residues include His1549, Asp1573, and Ser1633. Residues Pro1679–Glu1835 form the Helicase ATP-binding domain. Residues Lys1683–Gln1686 form an important for RNA-binding region. Leu1692–Thr1699 contributes to the ATP binding site. The short motif at Asp1783 to His1786 is the DEAH box element. The region spanning Pro1830–Glu2009 is the Helicase C-terminal domain. Lys1887 carries the post-translational modification N6-acetyllysine; by host. A helical membrane pass occupies residues Leu2167–Leu2187. The Lumenal portion of the chain corresponds to Met2188–Lys2191. The helical intramembrane region spans Gly2192–Leu2212. Topologically, residues Ser2213–Glu2214 are cytoplasmic. The helical transmembrane segment at Ile2215–Ile2235 threads the bilayer. The Lumenal segment spans residues Pro2236–Ala2250. Positions Ile2251 to Ala2265 form an intramembrane region, helical. Residues Asn2266–Ser2303 lie on the Lumenal side of the membrane. Positions Ala2304 to Thr2324 form an intramembrane region, helical. Residues Thr2325–Gly2340 lie on the Lumenal side of the membrane. Residues Val2341–Leu2361 traverse the membrane as a helical segment. At Met2362 to Pro2371 the chain is on the cytoplasmic side. Residues Leu2372 to Leu2392 form a helical membrane-spanning segment. The Lumenal portion of the chain corresponds to Gln2393–Gln2437. A helical membrane pass occupies residues Val2438–Gly2458. Residues Glu2459–Leu3419 lie on the Cytoplasmic side of the membrane. The mRNA cap 0-1 NS5-type MT domain maps to Gly2517–Ala2781. MRNA-binding residues include Lys2529, Leu2532, Asn2533, Met2535, Phe2540, and Lys2544. Lys2529 to Met2535 contributes to the GTP binding site. Ser2572 is a binding site for S-adenosyl-L-methionine. Ser2572 carries the phosphoserine modification. Lys2577 (for 2'-O-MTase activity) is an active-site residue. Residues Val2593–Leu2596 are SUMO-interacting motif (SIM). S-adenosyl-L-methionine is bound by residues Gly2602, Trp2603, Thr2620, Lys2621, His2626, Glu2627, Asp2647, Val2648, Asp2662, and Ile2663. The active-site For 2'-O-MTase activity is the Asp2662. Glu2665–Glu2671 lines the GTP pocket. Ser2666 contacts mRNA. Lys2698 functions as the For 2'-O-MTase activity in the catalytic mechanism. MRNA contacts are provided by Arg2729 and Ser2731. Arg2729–Ser2731 is a binding site for GTP. The active-site For 2'-O-MTase activity is Glu2734. Tyr2736 contributes to the S-adenosyl-L-methionine binding site. The Nuclear localization signal (NLS) signature appears at Lys2904 to Val2910. Zn(2+) is bound by residues Glu2955, His2959, Cys2964, and Cys2967. One can recognise a RdRp catalytic domain in the interval Gly3045–Ala3195. Zn(2+) is bound by residues His3230, Cys3246, and Cys3365.

It in the N-terminal section; belongs to the class I-like SAM-binding methyltransferase superfamily. mRNA cap 0-1 NS5-type methyltransferase family. In terms of assembly, homodimer. Interacts with host SERTAD3; this interaction promotes capsid protein C degradation. Interacts with host CAPRIN1; this interaction is probably linked to the inhibition of stress granules formation by the virus. Interacts with host G3BP1; this interaction is probably linked to the inhibition of stress granules formation by the virus. As to quaternary structure, forms heterodimers with envelope protein E in the endoplasmic reticulum and Golgi. Interacts with non-structural protein 2A. Homodimer; in the endoplasmic reticulum and Golgi. Interacts with host TYRO3, AXL and DC-SIGN proteins. Interacts with non-structural protein 2A. Interacts with host HAVCR1; this interaction likely mediates virus attachment to host cell. Interacts with host NCAM1. Interacts with host HSPA5. Interacts with Aedes aegypti SRPN25, APY and venom allergen-1 salivary proteins; the interactions do not affect Zika virus replication in human endothelial cells and keratinocytes. In terms of assembly, homodimer; Homohexamer when secreted. Interacts with host TBK1. Interacts with host USP8. Interacts with envelope protein E. Interacts with host HSPA5. As to quaternary structure, interacts with the structural protein prM/E complex, and the NS2B/NS3 protease complex. Forms a heterodimer with serine protease NS3. May form homooligomers. Interacts with human SPCS1. Interacts with non-structural protein 2A. In terms of assembly, forms a heterodimer with NS2B. Interacts with NS4B. Interacts with unphosphorylated RNA-directed RNA polymerase NS5; this interaction stimulates RNA-directed RNA polymerase NS5 guanylyltransferase activity. Interacts with non-structural protein 2A. Interacts with host SHFL; this interaction promotes NS3 degradation via a lysosome-dependent pathway. Interacts with host CEP63; this interaction disorganizes the centrosome and inhibits host innate immune response. As to quaternary structure, may interact with host ANKLE2; the interaction may cause defects in brain development, such as microcephaly. May interact with host SRPRA and SEC61G. Interacts with serine protease NS3. Interacts with NS1. Interacts with host TBK1. In terms of assembly, homodimer. Interacts with host STAT2; this interaction inhibits the phosphorylation of the latter, and, when all viral proteins are present (polyprotein), targets STAT2 for degradation. Interacts with host TBK1 and IKBKE; these interactions lead to the inhibition of the host RIG-I signaling pathway. Interacts with host KPNA2. Interacts with host PAF1 complex; the interaction may prevent the recruitment of the host PAF1 complex to interferon-responsive genes, and thus reduces the immune response. Interacts with serine protease NS3. Interacts with host ZSWIM8; this interaction allows STAT2 binding to ZSWIM8 and subsequent proteasomal degradation leading to inhibition of interferon signaling. In terms of processing, specific enzymatic cleavages in vivo yield mature proteins. Cleavages in the lumen of endoplasmic reticulum are performed by host signal peptidase, whereas cleavages in the cytoplasmic side are performed by serine protease NS3. Signal cleavage at the 2K-4B site requires a prior NS3 protease-mediated cleavage at the 4A-2K site. Cleaved in post-Golgi vesicles by a host furin, releasing the mature small envelope protein M, and peptide pr. This cleavage is incomplete as up to 30% of viral particles still carry uncleaved prM. Post-translationally, N-glycosylation plays a role in virulence in mammalian and mosquito hosts, but may have no effect on neurovirulence. In terms of processing, ubiquitination by host TRIM7 promotes virus attachment and fusion of the virus and the host endosome membrane. N-glycosylated. The excreted form is glycosylated, which is required for efficient secretion of the protein from infected cells. Post-translationally, acetylated by host KAT5. Acetylation modulates NS3 RNA-binding and unwinding activities and plays an important positive role for viral replication. In terms of processing, phosphorylated on serines residues. This phosphorylation may trigger NS5 nuclear localization. Sumoylated, required for regulating IFN induced interferon stimulated genes/ISGs.

Its subcellular location is the virion. It is found in the host nucleus. It localises to the host cytoplasm. The protein resides in the host perinuclear region. The protein localises to the secreted. Its subcellular location is the virion membrane. It is found in the host endoplasmic reticulum membrane. The enzyme catalyses Selective hydrolysis of -Xaa-Xaa-|-Yaa- bonds in which each of the Xaa can be either Arg or Lys and Yaa can be either Ser or Ala.. The catalysed reaction is RNA(n) + a ribonucleoside 5'-triphosphate = RNA(n+1) + diphosphate. It carries out the reaction a ribonucleoside 5'-triphosphate + H2O = a ribonucleoside 5'-diphosphate + phosphate + H(+). It catalyses the reaction ATP + H2O = ADP + phosphate + H(+). The enzyme catalyses a 5'-end (5'-triphosphoguanosine)-ribonucleoside in mRNA + S-adenosyl-L-methionine = a 5'-end (N(7)-methyl 5'-triphosphoguanosine)-ribonucleoside in mRNA + S-adenosyl-L-homocysteine. The catalysed reaction is a 5'-end (N(7)-methyl 5'-triphosphoguanosine)-ribonucleoside in mRNA + S-adenosyl-L-methionine = a 5'-end (N(7)-methyl 5'-triphosphoguanosine)-(2'-O-methyl-ribonucleoside) in mRNA + S-adenosyl-L-homocysteine + H(+). Plays a role in virus budding by binding to the host cell membrane and packages the viral RNA into a nucleocapsid that forms the core of the mature virus particle. During virus entry, may induce genome penetration into the host cytoplasm after hemifusion induced by the surface proteins. Can migrate to the cell nucleus where it modulates host functions. Inhibits the integrated stress response (ISR) in the infected cell. Its function is as follows. Inhibits RNA silencing by interfering with host Dicer. In terms of biological role, prevents premature fusion activity of envelope proteins in trans-Golgi by binding to envelope protein E at pH 6.0. After virion release in extracellular space, gets dissociated from E dimers. Functionally, plays a role in host immune defense modulation and protection of envelope protein E during virion synthesis. PrM-E cleavage is inefficient, many virions are only partially matured and immature prM-E proteins could play a role in immune evasion. Contributes to fetal microcephaly in humans. Acts as a chaperone for envelope protein E during intracellular virion assembly by masking and inactivating envelope protein E fusion peptide. prM is the only viral peptide matured by host furin in the trans-Golgi network probably to avoid catastrophic activation of the viral fusion activity in acidic Golgi compartment prior to virion release. May play a role in virus budding. Exerts cytotoxic effects by activating a mitochondrial apoptotic pathway through M ectodomain. May display a viroporin activity. Its function is as follows. Binds to host cell surface receptors and mediates fusion between viral and cellular membranes. Efficient virus attachment to cell is, at least in part, mediated by host HAVCR1 in a cell-type specific manner. In addition, host NCAM1 can also be used as entry receptor. Interaction with host HSPA5 plays an important role in the early stages of infection as well. Envelope protein is synthesized in the endoplasmic reticulum and forms a heterodimer with protein prM. The heterodimer plays a role in virion budding in the ER, and the newly formed immature particle is covered with 60 spikes composed of heterodimers between precursor prM and envelope protein E. The virion is transported to the Golgi apparatus where the low pH causes the dissociation of PrM-E heterodimers and formation of E homodimers. PrM-E cleavage is inefficient, many virions are only partially matured and immature prM-E proteins could play a role in immune evasion. In terms of biological role, plays a role in the inhibition of host RLR-induced interferon-beta activation by targeting TANK-binding kinase 1/TBK1. In addition, recruits the host deubiquitinase USP8 to cleave 'Lys-11'-linked polyubiquitin chains from caspase-1/CASP1 thus inhibiting its proteasomal degradation. In turn, stabilized CASP1 promotes cleavage of cGAS, which inhibits its ability to recognize mitochondrial DNA release and initiate type I interferon signaling. Functionally, component of the viral RNA replication complex that recruits genomic RNA, the structural protein prM/E complex, and the NS2B/NS3 protease complex to the virion assembly site and orchestrates virus morphogenesis. Antagonizes also the host MDA5-mediated induction of alpha/beta interferon antiviral response. May disrupt adherens junction formation and thereby impair proliferation of radial cells in the host cortex. Required cofactor for the serine protease function of NS3. Its function is as follows. Displays three enzymatic activities: serine protease, NTPase and RNA helicase. NS3 serine protease, in association with NS2B, performs its autocleavage and cleaves the polyprotein at dibasic sites in the cytoplasm: C-prM, NS2A-NS2B, NS2B-NS3, NS3-NS4A, NS4A-2K and NS4B-NS5. NS3 RNA helicase binds RNA and unwinds dsRNA in the 3' to 5' direction. Leads to translation arrest when expressed ex vivo. Disrupts host centrosome organization in a CEP63-dependent manner to degrade host TBK1 and inhibits innate immune response. Inhibits the integrated stress response (ISR) in the infected cell. In terms of biological role, regulates the ATPase activity of the NS3 helicase activity. NS4A allows NS3 helicase to conserve energy during unwinding. Cooperatively with NS4B suppresses the Akt-mTOR pathway and leads to cellular dysregulation. By inhibiting host ANKLE2 functions, may cause defects in brain development, such as microcephaly. Also antagonizes the host MDA5-mediated induction of alpha/beta interferon antiviral response. Inhibits the integrated stress response (ISR) in the infected cell. Functionally, functions as a signal peptide for NS4B and is required for the interferon antagonism activity of the latter. Induces the formation of ER-derived membrane vesicles where the viral replication takes place. Also plays a role in the inhibition of host RLR-induced interferon-beta production at TANK-binding kinase 1/TBK1 level. Cooperatively with NS4A suppresses the Akt-mTOR pathway and leads to cellular dysregulation. Its function is as follows. Replicates the viral (+) and (-) RNA genome, and performs the capping of genomes in the cytoplasm. Methylates viral RNA cap at guanine N-7 and ribose 2'-O positions. Once sufficient NS5 is expressed, binds to the cap-proximal structure and inhibits further translation of the viral genome. Besides its role in RNA genome replication, also prevents the establishment of a cellular antiviral state by blocking the interferon-alpha/beta (IFN-alpha/beta) signaling pathway. Mechanistically, interferes with host kinases TBK1 and IKKE upstream of interferon regulatory factor 3/IRF3 to inhibit the RIG-I pathway. Also antagonizes type I interferon signaling by targeting STAT2 for degradation by the proteasome thereby preventing activation of JAK-STAT signaling pathway. Mechanistically, acts as a scaffold protein to connect host ZSWIM8/CUL3 ligase complex and STAT2, leading to STAT2 degradation. Within the host nucleus, disrupts host SUMO1 and STAT2 co-localization with PML, resulting in PML degradation. May also reduce immune responses by preventing the recruitment of the host PAF1 complex to interferon-responsive genes. The protein is Genome polyprotein of Aedes aegypti (Yellowfever mosquito).